The sequence spans 98 residues: Large ribosomal subunit protein uL23 (98 aa).

Belongs to the universal ribosomal protein uL23 family. As to quaternary structure, part of the 50S ribosomal subunit. Contacts protein L29, and trigger factor when it is bound to the ribosome.

Functionally, one of the early assembly proteins it binds 23S rRNA. One of the proteins that surrounds the polypeptide exit tunnel on the outside of the ribosome. Forms the main docking site for trigger factor binding to the ribosome. The sequence is that of Large ribosomal subunit protein uL23 from Rickettsia prowazekii (strain Madrid E).